The sequence spans 311 residues: ATP synthase gamma chain (311 aa).

An intrachain disulfide couples cysteine 67 to cysteine 138.

Belongs to the ATPase gamma chain family. F-type ATPases have 2 components, CF(1) - the catalytic core - and CF(0) - the membrane proton channel. CF(1) has five subunits: alpha(3), beta(3), gamma(1), delta(1), epsilon(1). CF(0) has three main subunits: a, b and c.

It is found in the cellular thylakoid membrane. With respect to regulation, thiol-modulation by raising the activation threshold of the enzyme upon oxidation of the cysteines, thereby preventing wasteful ATP-hydrolysis. Functionally, produces ATP from ADP in the presence of a proton gradient across the membrane. The gamma chain is believed to be important in regulating ATPase activity and the flow of protons through the CF(0) complex. In Arthrospira platensis (Spirulina platensis), this protein is ATP synthase gamma chain (atpG).